A 138-amino-acid polypeptide reads, in one-letter code: Nucleoside diphosphate kinase (138 aa).

Positions 11, 59, 87, 93, 104, and 114 each coordinate ATP. H117 acts as the Pros-phosphohistidine intermediate in catalysis.

It belongs to the NDK family. Requires Mg(2+) as cofactor.

It localises to the cytoplasm. The enzyme catalyses a 2'-deoxyribonucleoside 5'-diphosphate + ATP = a 2'-deoxyribonucleoside 5'-triphosphate + ADP. The catalysed reaction is a ribonucleoside 5'-diphosphate + ATP = a ribonucleoside 5'-triphosphate + ADP. In terms of biological role, major role in the synthesis of nucleoside triphosphates other than ATP. The ATP gamma phosphate is transferred to the NDP beta phosphate via a ping-pong mechanism, using a phosphorylated active-site intermediate. The polypeptide is Nucleoside diphosphate kinase (Saccharolobus islandicus (strain Y.N.15.51 / Yellowstone #2) (Sulfolobus islandicus)).